We begin with the raw amino-acid sequence, 404 residues long: Mitochondrial potassium channel (404 aa).

The N-terminal 30 residues, 1–30 (MTGRSRVLAMRHVGGVSPVLVRRDLFLTRT), are a transit peptide targeting the mitochondrion. Residues 31–196 (LCSHGPSQPR…KERTRAERTK (166 aa)) are Mitochondrial matrix-facing. Position 65 is a phosphoserine (Ser-65). Positions 111 to 138 (VREAREDLESQQTKLKEVRDRLDRISRD) form a coiled coil. Residues 197–217 (NWSLIGSVLGALIGVAGSTYV) form a helical membrane-spanning segment. Residues 218–380 (NRVRLQELKA…LEAQVNRNTV (163 aa)) lie on the Mitochondrial intermembrane side of the membrane. Residues 381–401 (YGTLVTCATFVAVLPVLYMLF) traverse the membrane as a helical segment. At 402–404 (RAS) the chain is on the mitochondrial matrix side.

In terms of assembly, the mitochondrial potassium channel (mitoK(ATP)) forms a heteromultimer.

The protein localises to the mitochondrion inner membrane. It catalyses the reaction K(+)(in) = K(+)(out). Its activity is regulated as follows. Channel activity inhibited by ATP via ABCB8/MITOSUR subunit. Pore-forming subunit of the mitochondrial ATP-gated potassium channel (mitoK(ATP)). Together with ATP-binding subunit ABCB8/MITOSUR of the mitoK(ATP) channel, mediates ATP-dependent K(+) currents across the mitochondrial inner membrane. An increase in ATP intracellular levels closes the channel, inhibiting K(+) transport, whereas a decrease in ATP levels enhances K(+) uptake in the mitochondrial matrix. May contribute to the homeostatic control of cellular metabolism under stress conditions by regulating the mitochondrial matrix volume. This chain is Mitochondrial potassium channel, found in Bos taurus (Bovine).